Reading from the N-terminus, the 192-residue chain is Ion-translocating oxidoreductase complex subunit A (192 aa).

Transmembrane regions (helical) follow at residues 5–25 (LLLL…FLGL), 39–59 (IGMS…SYLV), 65–85 (LPFD…AVVV), 102–122 (ALGI…VALL), 134–154 (AIFG…FSAM), and 171–191 (AIAM…TGLV).

This sequence belongs to the NqrDE/RnfAE family. As to quaternary structure, the complex is composed of six subunits: RnfA, RnfB, RnfC, RnfD, RnfE and RnfG.

The protein resides in the cell inner membrane. Its function is as follows. Part of a membrane-bound complex that couples electron transfer with translocation of ions across the membrane. The sequence is that of Ion-translocating oxidoreductase complex subunit A from Shewanella baltica (strain OS223).